The chain runs to 229 residues: Heptaprenylglyceryl phosphate synthase (229 aa).

Sn-glycerol 1-phosphate is bound at residue Lys-12. Mg(2+) contacts are provided by Asp-14 and Ser-40. Sn-glycerol 1-phosphate contacts are provided by residues Tyr-159–Gly-164, Gly-189, and Gly-209–Asn-210.

Belongs to the GGGP/HepGP synthase family. Group I subfamily. Homodimer. Requires Mg(2+) as cofactor.

The enzyme catalyses sn-glycerol 1-phosphate + all-trans-heptaprenyl diphosphate = 3-heptaprenyl-sn-glycero-1-phosphate + diphosphate. It functions in the pathway membrane lipid metabolism; glycerophospholipid metabolism. Prenyltransferase that catalyzes in vivo the transfer of the heptaprenyl moiety of heptaprenyl pyrophosphate (HepPP; 35 carbon atoms) to the C3 hydroxyl of sn-glycerol-1-phosphate (G1P), producing heptaprenylglyceryl phosphate (HepGP). This reaction is an ether-bond-formation step in the biosynthesis of archaea-type G1P-based membrane lipids found in Bacillales. This is Heptaprenylglyceryl phosphate synthase from Bacillus cereus (strain B4264).